Here is a 475-residue protein sequence, read N- to C-terminus: Sulfate adenylyltransferase subunit 1 (475 aa).

The 215-residue stretch at 25–239 folds into the tr-type G domain; that stretch reads KSLLRFLTCG…EVLETVEIQR (215 aa). The segment at 34–41 is G1; it reads GSVDDGKS. 34 to 41 is a GTP binding site; sequence GSVDDGKS. The G2 stretch occupies residues 92-96; it reads GITID. Positions 113-116 are G3; sequence DTPG. Residues 113–117 and 168–171 each bind GTP; these read DTPGH and NKMD. A G4 region spans residues 168–171; sequence NKMD. The segment at 206–208 is G5; it reads SAL.

The protein belongs to the TRAFAC class translation factor GTPase superfamily. Classic translation factor GTPase family. CysN/NodQ subfamily. In terms of assembly, heterodimer composed of CysD, the smaller subunit, and CysN.

It catalyses the reaction sulfate + ATP + H(+) = adenosine 5'-phosphosulfate + diphosphate. It participates in sulfur metabolism; hydrogen sulfide biosynthesis; sulfite from sulfate: step 1/3. In terms of biological role, with CysD forms the ATP sulfurylase (ATPS) that catalyzes the adenylation of sulfate producing adenosine 5'-phosphosulfate (APS) and diphosphate, the first enzymatic step in sulfur assimilation pathway. APS synthesis involves the formation of a high-energy phosphoric-sulfuric acid anhydride bond driven by GTP hydrolysis by CysN coupled to ATP hydrolysis by CysD. The protein is Sulfate adenylyltransferase subunit 1 of Escherichia coli (strain ATCC 8739 / DSM 1576 / NBRC 3972 / NCIMB 8545 / WDCM 00012 / Crooks).